Consider the following 326-residue polypeptide: Protein-arginine N-acetylglucosaminyltransferase NleB2 (326 aa).

UDP-N-acetyl-alpha-D-glucosamine contacts are provided by residues 45–47, Tyr-69, and 216–219; these read QWF and YLDM. Residues 218 to 220 carry the DXD motif motif; it reads DMD. Asp-220 is a Mn(2+) binding site. Residue Glu-250 is the Proton acceptor of the active site. Positions 317 and 319 each coordinate Mn(2+). UDP-N-acetyl-alpha-D-glucosamine contacts are provided by residues Ser-319 and 324 to 326; that span reads SSW.

It belongs to the glycosyltransferase NleB family. Mn(2+) is required as a cofactor.

Its subcellular location is the secreted. It is found in the host cell. It catalyses the reaction L-arginyl-[protein] + UDP-N-acetyl-alpha-D-glucosamine = N(omega)-(N-acetyl-beta-D-glucosaminyl)-L-arginyl-[protein] + UDP + H(+). Its function is as follows. Protein-arginine N-acetylglucosaminyltransferase effector that catalyzes the transfer of a single N-acetylglucosamine (GlcNAc) to a conserved arginine residue of host target proteins. In contrast to NleB1, not able to disrupt TNF signaling in infected cells. Shows a lower enzymatic activity than NleB1. In Escherichia coli O145:H28 (strain RM12581), this protein is Protein-arginine N-acetylglucosaminyltransferase NleB2.